We begin with the raw amino-acid sequence, 412 residues long: MACRSGCCCNSIGSFNEDNARFLMLALLIIIYLLCGAAVFSALEQPKEKLAKERWAQRIEQFTNKYNLSQDDLKNFLRNYEEANVAGIRVDATRARWDFAGAFYFVGTVVSTIGFGMTTPVTIAGKIFLIFYGLIGCAATILFFNLFLERVITVIAFVLKFCHERRESRKAGPTQNCRRPSTDNRDRRTDSLAGWKPSVYCVMLILGVAAILVSCCASAMYSAAEGWDYLDALYFCFVAFSTIGFGDMVSNQREIYEAQVAYRVGNFLFILTGVCCIYSLFNVISIVIKQVLNWLLRRLETPCHCPGRGNRHPRRNAVVPGHMRSRRENSIETDAVNDSEADGRRMSGEMISMKDFLAANKVNLAIMQKQLSEMANGHPRQSGSSSRHNEFSGGVGALGIMNNRLAETSVDR.

Residues 1–21 (MACRSGCCCNSIGSFNEDNAR) are Cytoplasmic-facing. Residues 22–42 (FLMLALLIIIYLLCGAAVFSA) traverse the membrane as a helical segment. Positions 97 to 117 (WDFAGAFYFVGTVVSTIGFGM) form an intramembrane region, pore-forming. Threonine 112, isoleucine 113, and glycine 114 together coordinate K(+). Positions 112 to 117 (TIGFGM) are selectivity filter 1. The chain crosses the membrane as a helical span at residues 127–147 (IFLIFYGLIGCAATILFFNLF). Residues 148-198 (LERVITVIAFVLKFCHERRESRKAGPTQNCRRPSTDNRDRRTDSLAGWKPS) lie on the Cytoplasmic side of the membrane. A helical transmembrane segment spans residues 199-219 (VYCVMLILGVAAILVSCCASA). The pore-forming intramembrane region spans 229-249 (YLDALYFCFVAFSTIGFGDMV). K(+) is bound by residues threonine 242, isoleucine 243, glycine 244, and phenylalanine 245. Residues 242–247 (TIGFGD) are selectivity filter 2. Residues 268-288 (LFILTGVCCIYSLFNVISIVI) traverse the membrane as a helical segment. Topologically, residues 289–412 (KQVLNWLLRR…NRLAETSVDR (124 aa)) are cytoplasmic. A compositionally biased stretch (polar residues) spans 374–386 (MANGHPRQSGSSS). The tract at residues 374–395 (MANGHPRQSGSSSRHNEFSGGV) is disordered.

This sequence belongs to the two pore domain potassium channel (TC 1.A.1.8) family. Homodimer. Heterodimer. As to expression, brain and heart.

It localises to the cell membrane. It carries out the reaction K(+)(in) = K(+)(out). Its activity is regulated as follows. The channel conductance is activated by arachidonic acid and inhibited by Ba(2+) ions, volatile anesthetics such as halothane and antiarrhythmic drug mexiletine. Insensitive to extracellular pH change. Its function is as follows. K(+) channel that conducts outward rectifying tonic currents potentiated by purinergic signals. Homo- and heterodimerizes to form functional channels with distinct regulatory and gating properties. Contributes most of K(+) currents at the plasma membrane of resting microglia. Maintains a depolarized membrane potential required for proper ramified microglia morphology and phagocytosis, selectively mediating microglial pruning of presynaptic compartments at hippocampal excitatory synapses. Upon local release of ATP caused by neuronal injury or infection, it is potentiated by purinergic signaling and contributes to ATP-triggered K(+) efflux underlying microglial NLRP3 inflammasome assembly and IL1B release. The chain is Potassium channel, subfamily K, member 13 from Danio rerio (Zebrafish).